Reading from the N-terminus, the 203-residue chain is Holliday junction branch migration complex subunit RuvA (203 aa).

Residues 1 to 64 are domain I; the sequence is MIGRLRGIII…EDAQLLYGFN (64 aa). The tract at residues 65–142 is domain II; it reads NKQERTLFKE…KGLHGDLFTP (78 aa). Positions 143-154 are flexible linker; the sequence is AADLVLTSPASP. The segment at 155-203 is domain III; the sequence is ATNDAEQEAVAALVALGYKPQEASRMVSKIARPDASSETLIREALRAAL.

This sequence belongs to the RuvA family. In terms of assembly, homotetramer. Forms an RuvA(8)-RuvB(12)-Holliday junction (HJ) complex. HJ DNA is sandwiched between 2 RuvA tetramers; dsDNA enters through RuvA and exits via RuvB. An RuvB hexamer assembles on each DNA strand where it exits the tetramer. Each RuvB hexamer is contacted by two RuvA subunits (via domain III) on 2 adjacent RuvB subunits; this complex drives branch migration. In the full resolvosome a probable DNA-RuvA(4)-RuvB(12)-RuvC(2) complex forms which resolves the HJ.

The protein resides in the cytoplasm. The RuvA-RuvB-RuvC complex processes Holliday junction (HJ) DNA during genetic recombination and DNA repair, while the RuvA-RuvB complex plays an important role in the rescue of blocked DNA replication forks via replication fork reversal (RFR). RuvA specifically binds to HJ cruciform DNA, conferring on it an open structure. The RuvB hexamer acts as an ATP-dependent pump, pulling dsDNA into and through the RuvAB complex. HJ branch migration allows RuvC to scan DNA until it finds its consensus sequence, where it cleaves and resolves the cruciform DNA. The protein is Holliday junction branch migration complex subunit RuvA of Escherichia coli O9:H4 (strain HS).